A 220-amino-acid polypeptide reads, in one-letter code: Cysteine-rich venom protein (220 aa).

Positions 20-147 constitute an SCP domain; it reads DLHNSLRRSV…AYKYFYVCQY (128 aa). 8 cysteine pairs are disulfide-bonded: C56–C134, C73–C148, C129–C145, C167–C174, C170–C179, C183–C215, C192–C209, and C200–C213. In terms of domain architecture, ShKT spans 183–215; the sequence is CTREDEFINCNDLVKQGCQTDYLKSNCAASCFC.

As to expression, expressed by the venom gland.

The protein localises to the secreted. Functionally, blocks contraction of smooth muscle elicited by high potassium-induced depolarization, but does not block caffeine-stimulated contraction. May target voltage-gated calcium channels in smooth muscle. The sequence is that of Cysteine-rich venom protein from Echis coloratus (Carpet viper).